Here is a 258-residue protein sequence, read N- to C-terminus: Tryptophan synthase alpha chain (258 aa).

Catalysis depends on proton acceptor residues glutamate 52 and aspartate 63.

Belongs to the TrpA family. In terms of assembly, tetramer of two alpha and two beta chains.

The catalysed reaction is (1S,2R)-1-C-(indol-3-yl)glycerol 3-phosphate + L-serine = D-glyceraldehyde 3-phosphate + L-tryptophan + H2O. It participates in amino-acid biosynthesis; L-tryptophan biosynthesis; L-tryptophan from chorismate: step 5/5. Its function is as follows. The alpha subunit is responsible for the aldol cleavage of indoleglycerol phosphate to indole and glyceraldehyde 3-phosphate. The protein is Tryptophan synthase alpha chain of Streptococcus pneumoniae (strain JJA).